Here is a 453-residue protein sequence, read N- to C-terminus: Cyclic GMP-AMP phosphodiesterase SMPDL3A (453 aa).

The N-terminal stretch at 1 to 22 (MALVRALVCCLLTAWHCRSGLG) is a signal peptide. The Zn(2+) site is built by Asp-45 and His-47. Residues Cys-62 and Cys-81 are joined by a disulfide bond. Asn-69 is a glycosylation site (N-linked (GlcNAc...) asparagine). Position 110 (Asp-110) interacts with Zn(2+). His-114 serves as a coordination point for ATP. Residue Asn-131 is glycosylated (N-linked (GlcNAc...) asparagine). A Zn(2+)-binding site is contributed by Asn-151. Residues Asn-151 and His-152 each contribute to the ATP site. N-linked (GlcNAc...) asparagine glycans are attached at residues Asn-222 and Asn-238. His-252 is a binding site for Zn(2+). Asn-263 is a glycosylation site (N-linked (GlcNAc...) asparagine). His-293 and His-295 together coordinate Zn(2+). Asn-356 carries N-linked (GlcNAc...) asparagine glycosylation. 2 disulfides stabilise this stretch: Cys-420/Cys-424 and Cys-430/Cys-443. N-linked (GlcNAc...) asparagine glycosylation is present at Asn-437.

This sequence belongs to the acid sphingomyelinase family. Monomer. Homodimer; homodimerizes following 2',3'-cGAMP-binding. It depends on Zn(2+) as a cofactor. In terms of processing, N-glycosylation is required for protein maturation, secretion and phosphodiesterase activity. As to expression, detected in blood serum. Detected in macrophages (at protein level).

It is found in the secreted. The catalysed reaction is 2',3'-cGAMP + H2O = 5'-pGpA(2'-5') + H(+). It carries out the reaction 5'-pGpA(2'-5') + H2O = 5'-GpA(2'-5') + phosphate. It catalyses the reaction a ribonucleoside 5'-triphosphate + H2O = a ribonucleoside 5'-diphosphate + phosphate + H(+). The enzyme catalyses ATP + H2O = ADP + phosphate + H(+). With respect to regulation, requires micromolar levels of Zn(2+) for activity. Inhibited by millimolar levels of Zn(2+). Functionally, cyclic-nucleotide phosphodiesterase that acts as a negative regulator of innate immunity by mediating degradation of 2',3'-cGAMP, thereby inhibiting the cGAS-STING signaling. Specifically linearizes 2',3'-cGAMP into 2'5'-bond pGpA and further hydrolyzes pGpA to produce GpA. Also has in vitro nucleotide phosphodiesterase activity with nucleoside triphosphates, such as ATP. Has in vitro activity with p-nitrophenyl-TMP. Has lower activity with nucleoside diphosphates, and no activity with nucleoside monophosphates. Has in vitro activity with CDP-choline, giving rise to CMP and phosphocholine. Has in vitro activity with CDP-ethanolamine. Does not have sphingomyelin phosphodiesterase activity. The sequence is that of Cyclic GMP-AMP phosphodiesterase SMPDL3A from Homo sapiens (Human).